A 266-amino-acid polypeptide reads, in one-letter code: Undecaprenyl-diphosphatase (266 aa).

Transmembrane regions (helical) follow at residues 1 to 21 (MDTFQVIILALIQGLTEFLPI), 39 to 59 (QGLSFDVAVNTGSLLAVVMYF), 87 to 107 (WWIILATIPAVIVGFTAKGFI), 111 to 131 (LRNIEVIAATTIIFGLLLWWA), 144 to 164 (VGWKKALVIGLAQAMALIPGT), 183 to 203 (AAARFSFLMSVPVSLGAAILV), 218 to 238 (ALGLGIVVSFIAAYVCIHYFL), and 246 to 266 (MTPFVIYRLVLGAVLCGFIFL).

This sequence belongs to the UppP family.

The protein localises to the cell inner membrane. The catalysed reaction is di-trans,octa-cis-undecaprenyl diphosphate + H2O = di-trans,octa-cis-undecaprenyl phosphate + phosphate + H(+). Functionally, catalyzes the dephosphorylation of undecaprenyl diphosphate (UPP). Confers resistance to bacitracin. In Shewanella piezotolerans (strain WP3 / JCM 13877), this protein is Undecaprenyl-diphosphatase.